The following is a 469-amino-acid chain: 3-phosphoshikimate 1-carboxyvinyltransferase (469 aa).

The disordered stretch occupies residues 21–45 (KDTILTHSDQPRPLQSRANGPLTGK). Residues lysine 52, serine 53, and arginine 57 each coordinate 3-phosphoshikimate. Residue lysine 52 coordinates phosphoenolpyruvate. Phosphoenolpyruvate contacts are provided by glycine 125 and arginine 153. 3-phosphoshikimate contacts are provided by serine 199, glutamine 201, aspartate 352, and lysine 379. Phosphoenolpyruvate is bound at residue glutamine 201. The active-site Proton acceptor is aspartate 352. Residues arginine 383 and arginine 426 each contribute to the phosphoenolpyruvate site.

The protein belongs to the EPSP synthase family. In terms of assembly, monomer.

It is found in the cytoplasm. It catalyses the reaction 3-phosphoshikimate + phosphoenolpyruvate = 5-O-(1-carboxyvinyl)-3-phosphoshikimate + phosphate. The protein operates within metabolic intermediate biosynthesis; chorismate biosynthesis; chorismate from D-erythrose 4-phosphate and phosphoenolpyruvate: step 6/7. In terms of biological role, catalyzes the transfer of the enolpyruvyl moiety of phosphoenolpyruvate (PEP) to the 5-hydroxyl of shikimate-3-phosphate (S3P) to produce enolpyruvyl shikimate-3-phosphate and inorganic phosphate. This is 3-phosphoshikimate 1-carboxyvinyltransferase from Bradyrhizobium diazoefficiens (strain JCM 10833 / BCRC 13528 / IAM 13628 / NBRC 14792 / USDA 110).